Reading from the N-terminus, the 364-residue chain is MSQAVKDYYEILGVNRDATKEEIKKAYRKLVRIYHPDINPDPSAQEKFKEINEAYHVLIDDERRSEYDAILSRNDVGKFRDFLEYIQEFVESIIQGEKGKKRRPRKGQDIKMKLPLTLEEAGLGCEKEIIYSRWMDCPVCEGMGVKGEAETVVCHACNGEGRRVSGIFNFPRPCSVCKGKGFIVKNPCPTCYGRGRVSAQHKIKVHIPPGTEEGEVLKVPEKGHLGYFGGKPGDLYLKVVLKEHPIFKKVGKDLHMEKVVSFPLAVLGGTVKVPTLEGEEIDVFIQPGTECGATKVVKEKGYPYENGRGDLIIHIRIGVPKNLSKSERKLLEKLAESIKEEGEEVYREGGSLVEKLSSLFKKNA.

Positions 7–71 (DYYEILGVNR…ERRSEYDAIL (65 aa)) constitute a J domain. Residues 124–200 (GCEKEIIYSR…CYGRGRVSAQ (77 aa)) form a CR-type zinc finger. 8 residues coordinate Zn(2+): C137, C140, C154, C157, C174, C177, C188, and C191. CXXCXGXG motif repeat units follow at residues 137–144 (CPVCEGMG), 154–161 (CHACNGEG), 174–181 (CSVCKGKG), and 188–195 (CPTCYGRG).

The protein belongs to the DnaJ family. In terms of assembly, homodimer. It depends on Zn(2+) as a cofactor.

The protein resides in the cytoplasm. Participates actively in the response to hyperosmotic and heat shock by preventing the aggregation of stress-denatured proteins and by disaggregating proteins, also in an autonomous, DnaK-independent fashion. Unfolded proteins bind initially to DnaJ; upon interaction with the DnaJ-bound protein, DnaK hydrolyzes its bound ATP, resulting in the formation of a stable complex. GrpE releases ADP from DnaK; ATP binding to DnaK triggers the release of the substrate protein, thus completing the reaction cycle. Several rounds of ATP-dependent interactions between DnaJ, DnaK and GrpE are required for fully efficient folding. Also involved, together with DnaK and GrpE, in the DNA replication of plasmids through activation of initiation proteins. This is Chaperone protein DnaJ 1 from Aquifex aeolicus (strain VF5).